Reading from the N-terminus, the 317-residue chain is Olfactory receptor 6Q1 (317 aa).

Over 1-27 (MQPYTKNWTQVTEFVMMGFAGIHEAHL) the chain is Extracellular. N-linked (GlcNAc...) asparagine glycosylation occurs at Asn-7. Residues 28–48 (LFFILFLTMYLFTLVENLAII) form a helical membrane-spanning segment. Over 49-56 (LVVGLDHR) the chain is Cytoplasmic. A helical transmembrane segment spans residues 57-77 (LRRPMYFFLTHLSCLEIWYTS). The Extracellular segment spans residues 78-103 (VTVPKMLAGFIGVDGGKNISYADCLS). Asn-95 carries an N-linked (GlcNAc...) asparagine glycan. The cysteines at positions 101 and 193 are disulfide-linked. Residues 104–124 (QLFIFTFLGATECFLLAAMAY) form a helical membrane-spanning segment. Residues 125–143 (DRYVAICMPLHYGAFVSWG) are Cytoplasmic-facing. The helical transmembrane segment at 144 to 164 (TCIRLAAACWLVGFLTPILPI) threads the bilayer. The Extracellular segment spans residues 165 to 201 (YLLSQLTFYGPNVIDHFSCDASPLLALSCSDVTWKET). Residues 202–221 (VDFLVSLAVLLASSMVIAVS) traverse the membrane as a helical segment. The Cytoplasmic portion of the chain corresponds to 222-241 (YGNIVWTLLHIRSAAERWKA). A helical membrane pass occupies residues 242–262 (FSTCAAHLTVVSLFYGTLFFM). Residues 263-275 (YVQTKVTSSINFN) lie on the Extracellular side of the membrane. A helical membrane pass occupies residues 276-296 (KVVSVFYSVVTPMLNPLIYSL). Residues 297 to 317 (RNKEVKGALGRVFSLNFWKGQ) lie on the Cytoplasmic side of the membrane.

It belongs to the G-protein coupled receptor 1 family.

Its subcellular location is the cell membrane. Functionally, odorant receptor. In Homo sapiens (Human), this protein is Olfactory receptor 6Q1 (OR6Q1).